Here is a 61-residue protein sequence, read N- to C-terminus: Odorranain-A6 (61 aa).

A signal peptide spans 1–22 (MFSMKKSLLLLFFLGTISLSLC). A propeptide spanning residues 23-45 (EQERDAEEEEGSENGAEDIKINR) is cleaved from the precursor.

It belongs to the frog skin active peptide (FSAP) family. Brevinin subfamily. As to expression, expressed by the skin glands.

Its subcellular location is the secreted. The polypeptide is Odorranain-A6 (Odorrana hainanensis (Odor frog)).